Reading from the N-terminus, the 372-residue chain is Bifunctional enzyme IspD/IspF (372 aa).

The tract at residues 1-210 (MLDLSLIMLG…LNLNSPSNDI (210 aa)) is 2-C-methyl-D-erythritol 4-phosphate cytidylyltransferase. Residues 211–372 (FCGNGFDVHA…LKYFNWRNVL (162 aa)) form a 2-C-methyl-D-erythritol 2,4-cyclodiphosphate synthase region. A divalent metal cation contacts are provided by Asp217 and His219. 4-CDP-2-C-methyl-D-erythritol 2-phosphate-binding positions include 217–219 (DVH) and 243–244 (HS). His251 is an a divalent metal cation binding site. 4-CDP-2-C-methyl-D-erythritol 2-phosphate is bound by residues 265–267 (DIG), 270–274 (YPDND), 341–344 (TTTE), Phe348, and Arg351.

In the N-terminal section; belongs to the IspD/TarI cytidylyltransferase family. IspD subfamily. The protein in the C-terminal section; belongs to the IspF family. A divalent metal cation is required as a cofactor.

It catalyses the reaction 2-C-methyl-D-erythritol 4-phosphate + CTP + H(+) = 4-CDP-2-C-methyl-D-erythritol + diphosphate. The catalysed reaction is 4-CDP-2-C-methyl-D-erythritol 2-phosphate = 2-C-methyl-D-erythritol 2,4-cyclic diphosphate + CMP. The protein operates within isoprenoid biosynthesis; isopentenyl diphosphate biosynthesis via DXP pathway; isopentenyl diphosphate from 1-deoxy-D-xylulose 5-phosphate: step 2/6. Its pathway is isoprenoid biosynthesis; isopentenyl diphosphate biosynthesis via DXP pathway; isopentenyl diphosphate from 1-deoxy-D-xylulose 5-phosphate: step 4/6. Its function is as follows. Bifunctional enzyme that catalyzes the formation of 4-diphosphocytidyl-2-C-methyl-D-erythritol from CTP and 2-C-methyl-D-erythritol 4-phosphate (MEP) (IspD), and catalyzes the conversion of 4-diphosphocytidyl-2-C-methyl-D-erythritol 2-phosphate (CDP-ME2P) to 2-C-methyl-D-erythritol 2,4-cyclodiphosphate (ME-CPP) with a corresponding release of cytidine 5-monophosphate (CMP) (IspF). This is Bifunctional enzyme IspD/IspF from Campylobacter fetus subsp. fetus (strain 82-40).